We begin with the raw amino-acid sequence, 479 residues long: tRNA-2-methylthio-N(6)-dimethylallyladenosine synthase (479 aa).

Residues 6–122 (KTVYIKTVGC…IPDMLTKVTS (117 aa)) enclose the MTTase N-terminal domain. [4Fe-4S] cluster is bound by residues Cys15, Cys51, Cys85, Cys172, Cys176, and Cys179. The 233-residue stretch at 158 to 390 (RPTPFQAYLR…LAVQDRISKE (233 aa)) folds into the Radical SAM core domain. The TRAM domain occupies 393–464 (QKLIGDTVEV…SHTLIGRVKT (72 aa)).

This sequence belongs to the methylthiotransferase family. MiaB subfamily. As to quaternary structure, monomer. Requires [4Fe-4S] cluster as cofactor.

It localises to the cytoplasm. It catalyses the reaction N(6)-dimethylallyladenosine(37) in tRNA + (sulfur carrier)-SH + AH2 + 2 S-adenosyl-L-methionine = 2-methylsulfanyl-N(6)-dimethylallyladenosine(37) in tRNA + (sulfur carrier)-H + 5'-deoxyadenosine + L-methionine + A + S-adenosyl-L-homocysteine + 2 H(+). Its function is as follows. Catalyzes the methylthiolation of N6-(dimethylallyl)adenosine (i(6)A), leading to the formation of 2-methylthio-N6-(dimethylallyl)adenosine (ms(2)i(6)A) at position 37 in tRNAs that read codons beginning with uridine. This Rhodopirellula baltica (strain DSM 10527 / NCIMB 13988 / SH1) protein is tRNA-2-methylthio-N(6)-dimethylallyladenosine synthase.